The primary structure comprises 287 residues: Spermidine/putrescine transport system permease protein PotB (287 aa).

The Cytoplasmic portion of the chain corresponds to 1 to 10; it reads MKNTSKFQNV. Residues 11-31 form a helical membrane-spanning segment; it reads VIVTIVGWLVLFVFLPNLMII. The Periplasmic segment spans residues 32-70; it reads GTSFLTRDDASFVKMVFTLDNYARLLDPLYFEVLLHSLN. Residues 65-271 enclose the ABC transmembrane type-1 domain; the sequence is LLHSLNMALI…IVMGLMLLIY (207 aa). A helical transmembrane segment spans residues 71–91; the sequence is MALIATLSCLVLGYPFAWFLA. Over 92-99 the chain is Cytoplasmic; sequence KLPEKIRP. The helical transmembrane segment at 100–120 threads the bilayer; the sequence is LLLFLLIVPFWTNSLIRIYGL. The Periplasmic portion of the chain corresponds to 121–145; sequence KIFLSTKGYLNEFLLWLGVIDTPIR. A helical transmembrane segment spans residues 146 to 166; it reads IMFTPSAVIIGLVYILLPFMV. Over 167 to 197 the chain is Cytoplasmic; it reads MPLYSSIEKLDKPLLEAARDLGASKMQTFIR. A helical transmembrane segment spans residues 198-218; sequence IIIPLTMPGIVAGCLLVMLPA. Residues 219–251 lie on the Periplasmic side of the membrane; sequence MGLFYVSDLMGGAKNLLIGNVIKVQFLNIRDWP. A helical membrane pass occupies residues 252–272; that stretch reads FGAATSITLTIVMGLMLLIYW. The Cytoplasmic segment spans residues 273–287; the sequence is RASRLLNKKVSDISD.

This sequence belongs to the binding-protein-dependent transport system permease family. CysTW subfamily.

It localises to the cell inner membrane. Functionally, required for the activity of the bacterial periplasmic transport system of putrescine and spermidine. This is Spermidine/putrescine transport system permease protein PotB (potB) from Salmonella typhi.